The sequence spans 1019 residues: Probable LRR receptor-like serine/threonine-protein kinase At1g29720 (1019 aa).

An N-terminal signal peptide occupies residues M1 to L19. The Extracellular portion of the chain corresponds to T20 to P615. N-linked (GlcNAc...) asparagine glycans are attached at residues N21, N79, and N90. LRR repeat units lie at residues I93 to L117, P118 to M141, Y143 to F165, K166 to L189, T190 to R212, V214 to N236, W237 to L261, N263 to S283, K284 to L307, T308 to P330, K332 to L351, N352 to S374, and T375 to A398. N153, N167, and N188 each carry an N-linked (GlcNAc...) asparagine glycan. N-linked (GlcNAc...) asparagine glycans are attached at residues N225 and N236. 2 N-linked (GlcNAc...) asparagine glycosylation sites follow: N280 and N306. Residues N363, N387, N469, and N558 are each glycosylated (N-linked (GlcNAc...) asparagine). The chain crosses the membrane as a helical span at residues L616–A636. The Cytoplasmic segment spans residues R637–L1019. Residues F673–I946 form the Protein kinase domain. Residues L679 to V687 and K701 contribute to the ATP site. Y746 carries the post-translational modification Phosphotyrosine. The Proton acceptor role is filled by D797. S830 is modified (phosphoserine). Phosphothreonine occurs at positions 831 and 836. Y844 is modified (phosphotyrosine).

Belongs to the protein kinase superfamily. Ser/Thr protein kinase family.

The protein resides in the cell membrane. The enzyme catalyses L-seryl-[protein] + ATP = O-phospho-L-seryl-[protein] + ADP + H(+). It carries out the reaction L-threonyl-[protein] + ATP = O-phospho-L-threonyl-[protein] + ADP + H(+). The sequence is that of Probable LRR receptor-like serine/threonine-protein kinase At1g29720 (RFK1) from Arabidopsis thaliana (Mouse-ear cress).